A 425-amino-acid chain; its full sequence is MIDIKLIRQDPDFVKDALKKRGEDTDIIDEILKIDSEWRSVTTELNELRAKRNDISKNVAKLKKEGKSSEANALIEEGKRIGEEIKSLEEKEKELQSKLRDLLLRVPNIPHESVPVGSDESQNVEVRRWGEPRKFDFAPLAHWDLGPAWGLMDFDRASKLSGSRFTVMYGKLARLERALINFMLDVHTREHGYTEVWVPHLVKRETITITGQLPKFEEELYLTEKDDLFLIPTAEVPLVALHSGEILEEKDLPKKYVAYTPCYRREAGSYGKDVRGMIRQHQFDKVELVWITTPERSFDDLEQLVRDAETILQRLGLPYRVVSLCTGDLGFASAKTYDIEVWLPSYNAYKEISSCSNVTDFQARRGNMRYRRRSDGKLTLVHTLNGSGIAVGRTLVAILENYQQPDGSVKVPEALVPYTGFEVIP.

233-235 (TAE) serves as a coordination point for L-serine. 264-266 (RRE) contributes to the ATP binding site. Glutamate 287 provides a ligand contact to L-serine. 351–354 (EISS) lines the ATP pocket. L-serine is bound at residue serine 387.

The protein belongs to the class-II aminoacyl-tRNA synthetase family. Type-1 seryl-tRNA synthetase subfamily. As to quaternary structure, homodimer. The tRNA molecule binds across the dimer.

Its subcellular location is the cytoplasm. It carries out the reaction tRNA(Ser) + L-serine + ATP = L-seryl-tRNA(Ser) + AMP + diphosphate + H(+). The catalysed reaction is tRNA(Sec) + L-serine + ATP = L-seryl-tRNA(Sec) + AMP + diphosphate + H(+). It participates in aminoacyl-tRNA biosynthesis; selenocysteinyl-tRNA(Sec) biosynthesis; L-seryl-tRNA(Sec) from L-serine and tRNA(Sec): step 1/1. Functionally, catalyzes the attachment of serine to tRNA(Ser). Is also able to aminoacylate tRNA(Sec) with serine, to form the misacylated tRNA L-seryl-tRNA(Sec), which will be further converted into selenocysteinyl-tRNA(Sec). The sequence is that of Serine--tRNA ligase from Thermotoga neapolitana (strain ATCC 49049 / DSM 4359 / NBRC 107923 / NS-E).